The following is a 631-amino-acid chain: Peptidyl-prolyl cis-trans isomerase CYP71 (631 aa).

Residues 26–45 (VEEEEPMVGPGPAPRGKRKR) form a disordered region. WD repeat units follow at residues 68-106 (MHRD…IEFA), 111-150 (SHLG…MMAM), 201-240 (IHMN…FPED), and 257-297 (KCKT…RRVY). The 155-residue stretch at 474 to 628 (LPENVIMHTT…QDVKILNVTV (155 aa)) folds into the PPIase cyclophilin-type domain.

It belongs to the cyclophilin-type PPIase family. In terms of assembly, interacts with FAS1 and LHP1. Interacts (via WD repeat domain) with histone H3. Ubiquitous. Expressed in the meristems.

The protein resides in the nucleus. It carries out the reaction [protein]-peptidylproline (omega=180) = [protein]-peptidylproline (omega=0). Functionally, PPIases accelerate the folding of proteins. It catalyzes the cis-trans isomerization of proline imidic peptide bonds in oligopeptides. Histone proline isomerase that increases the rate of cis-trans isomerization of the synthetic histone H3 peptides H3P30 (RKSAP30F-p-nitroanilide) and H3P30K27me3 (RKme3-SAP30F-p-nitroanilide) in the histone H3 N-terminal tail, in vitro. Histone remodeling factor involved in chromatin-based gene silencing. Reinforces H3K27 methylation. Involved in fundamental processes of chromatin assembly and histone modification by mediating the targeting of FAS1 and LHP1 on the chromatin. Required for the formation and development of leaves, for normal phyllotaxy and for the formation, maintenance and activity of root and shoot apical meristems. The chain is Peptidyl-prolyl cis-trans isomerase CYP71 from Arabidopsis thaliana (Mouse-ear cress).